Consider the following 170-residue polypeptide: MASTRIREARESDCGDIMRMIRELAEFEKLSHQVKISEEALRADGFGENPFFHCLVAEIIPAPGESQGSLVVGYGLYYFIYSTWTGRNVYLEDIYVMPQYRGQGIGTKIIKKVAEVALNKGCSQFRLAVLDWNKKAVNLYKFLGAQDLTESEGWLSFRFEGEAMRELAGR.

Residues 4-166 (TRIREARESD…FRFEGEAMRE (163 aa)) form the N-acetyltransferase domain. A substrate-binding site is contributed by 27 to 28 (FE). N6-acetyllysine is present on Lys29. Glu92 lines the substrate pocket. Acetyl-CoA is bound by residues 94 to 96 (IYV), 102 to 107 (GQGIGT), 133 to 135 (NKK), and Tyr140. Tyr140 serves as the catalytic Proton donor. Substrate is bound at residue Glu152.

It belongs to the acetyltransferase family. In terms of assembly, homodimer.

The protein localises to the cytoplasm. The enzyme catalyses S-(2-aminoethyl)-L-cysteine + acetyl-CoA = S-(2-acetamidoethyl)-L-cysteine + CoA + H(+). The catalysed reaction is an alkane-alpha,omega-diamine + acetyl-CoA = an N-acetylalkane-alpha,omega-diamine + CoA + H(+). Its function is as follows. Catalyzes the N-acetylation of the amino acid thialysine (S-(2-aminoethyl)-L-cysteine), a L-lysine analog with the 4-methylene group substituted with a sulfur. May also catalyze acetylation of polyamines, such as norspermidine, spermidine or spermine. However, ability to acetylate polyamines is weak, suggesting that it does not act as a diamine acetyltransferase in vivo. This chain is Thialysine N-epsilon-acetyltransferase, found in Mus musculus (Mouse).